A 284-amino-acid polypeptide reads, in one-letter code: MFLATFKLCAGSSYRHMRNMKGLRHQAVLAIGQELNWRALGDSSPGWMGQVRRRSSLLGSQLEATLYSDQELSYIQQGEVAMQKALGILNNQEGWKKESQQENGDEVLSKMVPDVGKVFRLEVVVDQPMDRLYEELVDRMEAMGEWNPNVKEIKVLQRIGKDTVITHELAAAAAGNLVGPRDFVSVRCTKRRGSTCVLAGMATHFGEMPEQSGVIRAEHGPTCMVLHPLAGSPSKTKLTWLLSIDLKGWLPKTIINQVLSQTQIEFANHLRKRLEASPASEAQC.

The transit peptide at 1–62 (MFLATFKLCA…RRSSLLGSQL (62 aa)) directs the protein to the mitochondrion. Ser-56 and Ser-194 each carry phosphoserine; by PKA. The START domain maps to 66–279 (LYSDQELSYI…LRKRLEASPA (214 aa)).

May interact with TSPO. Expressed within glia and neurons in discrete regions of the brain.

It localises to the mitochondrion. It carries out the reaction cholesterol(in) = cholesterol(out). The protein operates within steroid metabolism; cholesterol metabolism. Plays a key role in steroid hormone synthesis by enhancing the metabolism of cholesterol into pregnenolone. Transporter that binds to and transport cholesterol through the intermembrane space of the mitochondrion. The sequence is that of Steroidogenic acute regulatory protein, mitochondrial (Star) from Mus musculus (Mouse).